Consider the following 274-residue polypeptide: Putative ABC transporter ATP-binding protein MM_1037 (274 aa).

An ABC transporter domain is found at 2 to 235; that stretch reads IRLENVSYCY…PSLKDLGLTP (234 aa). 35-42 contributes to the ATP binding site; sequence GRNGSGKS.

The protein belongs to the ABC transporter superfamily.

It localises to the cell membrane. Functionally, probably part of an ABC transporter complex. Responsible for energy coupling to the transport system. The protein is Putative ABC transporter ATP-binding protein MM_1037 of Methanosarcina mazei (strain ATCC BAA-159 / DSM 3647 / Goe1 / Go1 / JCM 11833 / OCM 88) (Methanosarcina frisia).